Here is a 222-residue protein sequence, read N- to C-terminus: GTP-binding nuclear protein Ran-4 (222 aa).

Residues Asp-10–Asp-174 enclose the Small GTPase Ran-type domain. Asp-21–Thr-28 contacts GTP. The switch-I stretch occupies residues His-40 to Val-48. Residues Gly-71, Asn-125–Asp-128, and Ser-153–Lys-155 each bind GTP. Residues Gly-71 to Gln-87 are switch-II.

This sequence belongs to the small GTPase superfamily. Ran family. Found in a nuclear export complex with RanGTP, exportin and pre-miRNA.

Its subcellular location is the nucleus. Functionally, GTP-binding protein involved in nucleocytoplasmic transport. Required for the import of protein into the nucleus and also for RNA export. Involved in chromatin condensation and control of cell cycle. This chain is GTP-binding nuclear protein Ran-4 (RAN4), found in Arabidopsis thaliana (Mouse-ear cress).